We begin with the raw amino-acid sequence, 35 residues long: Tau-theraphotoxin-Pc1b (35 aa).

Cystine bridges form between cysteine 3–cysteine 17, cysteine 10–cysteine 22, and cysteine 16–cysteine 29. Phenylalanine 35 bears the Phenylalanine amide mark.

It belongs to the neurotoxin 10 (Hwtx-1) family. 62 (Vatx) subfamily. As to expression, expressed by the venom gland.

The protein resides in the secreted. Its function is as follows. Selectively activates the mammalian capsaicin receptor TRPV1, a non-selective cation channel expressed by sensory neurons of the pain pathway. Is more potent than VaTx1, but less potent than VaTx3. Interacts with distinct regions of the channel than capsaicin, since it only acts on the extracellular face of the channel, and capsaicin binds to the cytosolic side. Also activates avian TRPV1, which is insensitive to capsaicin. Produce weak inhibition on potassium channels Kv2.1/KCNB1. The sequence is that of Tau-theraphotoxin-Pc1b from Psalmopoeus cambridgei (Trinidad chevron tarantula).